A 387-amino-acid chain; its full sequence is 2-alkyl-3-oxoalkanoate reductase (387 aa).

Tyrosine 190 (proton acceptor) is an active-site residue. Position 194 (lysine 194) interacts with NADP(+).

The protein belongs to the 3-beta-HSD family.

The enzyme catalyses a (2R,3S)-2-alkyl-3-hydroxyalkanoate + NADP(+) = an (R)-2-alkyl-3-oxoalkanoate + NADPH + H(+). Its function is as follows. Involved in olefin biosynthesis. Catalyzes the reversible stereospecific NADPH-dependent reduction of 2-alkyl-3-oxoalkanoic acids to 2-alkyl-3-hydroxyalkanoic acids. The S.oneidensis oleABCD genes produce 3,6,9,12,15,19,22,25,28-hentriacontanonaene, which may aid the cells in adapting to a sudden drop in temperature. The sequence is that of 2-alkyl-3-oxoalkanoate reductase from Shewanella oneidensis (strain ATCC 700550 / JCM 31522 / CIP 106686 / LMG 19005 / NCIMB 14063 / MR-1).